A 229-amino-acid polypeptide reads, in one-letter code: Dephospho-CoA kinase domain-containing protein (229 aa).

Residues 3–207 (LVGLTGGIAS…DCMQFLIIRA (205 aa)) form the DPCK domain. Position 8–15 (8–15 (GGIASGKS)) interacts with ATP.

Belongs to the CoaE family.

This is Dephospho-CoA kinase domain-containing protein (dcakd) from Danio rerio (Zebrafish).